The primary structure comprises 474 residues: Ribosomal RNA small subunit methyltransferase F (474 aa).

Residues 119–125 (AAAPGSK), Glu-143, Asp-170, and Asp-188 each bind S-adenosyl-L-methionine. The active-site Nucleophile is Cys-241.

Belongs to the class I-like SAM-binding methyltransferase superfamily. RsmB/NOP family.

It localises to the cytoplasm. The enzyme catalyses cytidine(1407) in 16S rRNA + S-adenosyl-L-methionine = 5-methylcytidine(1407) in 16S rRNA + S-adenosyl-L-homocysteine + H(+). Functionally, specifically methylates the cytosine at position 1407 (m5C1407) of 16S rRNA. This chain is Ribosomal RNA small subunit methyltransferase F, found in Shewanella oneidensis (strain ATCC 700550 / JCM 31522 / CIP 106686 / LMG 19005 / NCIMB 14063 / MR-1).